We begin with the raw amino-acid sequence, 296 residues long: Farnesyl diphosphate synthase (296 aa).

Residues K46, R49, and H78 each coordinate isopentenyl diphosphate. D85 and D91 together coordinate Mg(2+). Residue R96 participates in (2E)-geranyl diphosphate binding. R97 lines the isopentenyl diphosphate pocket. Residues K182, T183, Q220, and K237 each coordinate (2E)-geranyl diphosphate.

Belongs to the FPP/GGPP synthase family. Mg(2+) serves as cofactor.

Its subcellular location is the cytoplasm. It catalyses the reaction isopentenyl diphosphate + (2E)-geranyl diphosphate = (2E,6E)-farnesyl diphosphate + diphosphate. The chain is Farnesyl diphosphate synthase (ispA) from Bacillus subtilis (strain 168).